The sequence spans 388 residues: Pepsin A-3 (388 aa).

The signal sequence occupies residues 1-15 (MKWLLLLGLVALSEC). Positions 16-62 (IMYKVPLIRKKSLRRTLSERGLLKDFLKKHNLNPARKYFPQWKAPTL) are cleaved as a propeptide — activation peptide. The Peptidase A1 domain maps to 76–385 (YFGTIGIGTP…DRANNQVGLA (310 aa)). The active site involves aspartate 94. Disulfide bonds link cysteine 107–cysteine 112 and cysteine 268–cysteine 272. The active site involves aspartate 277. Cysteine 311 and cysteine 344 are disulfide-bonded.

This sequence belongs to the peptidase A1 family.

Its subcellular location is the secreted. The catalysed reaction is Preferential cleavage: hydrophobic, preferably aromatic, residues in P1 and P1' positions. Cleaves 1-Phe-|-Val-2, 4-Gln-|-His-5, 13-Glu-|-Ala-14, 14-Ala-|-Leu-15, 15-Leu-|-Tyr-16, 16-Tyr-|-Leu-17, 23-Gly-|-Phe-24, 24-Phe-|-Phe-25 and 25-Phe-|-Tyr-26 bonds in the B chain of insulin.. In terms of biological role, shows particularly broad specificity; although bonds involving phenylalanine and leucine are preferred, many others are also cleaved to some extent. This Homo sapiens (Human) protein is Pepsin A-3 (PGA3).